The chain runs to 210 residues: Probable membrane protein Rv1733c (210 aa).

2 helical membrane-spanning segments follow: residues 43–63 (AVVM…AAAA) and 165–185 (ALAA…LLAL).

The protein resides in the cell membrane. The polypeptide is Probable membrane protein Rv1733c (Mycobacterium tuberculosis (strain ATCC 25618 / H37Rv)).